The primary structure comprises 145 residues: Ribonuclease HI (145 aa).

One can recognise an RNase H type-1 domain in the interval 1-142 (MNQTVYLYTD…ADDLANRGAA (142 aa)). Asp-10, Glu-48, Asp-70, and Asp-134 together coordinate Mg(2+).

The protein belongs to the RNase H family. In terms of assembly, monomer. Mg(2+) is required as a cofactor.

The protein resides in the cytoplasm. It catalyses the reaction Endonucleolytic cleavage to 5'-phosphomonoester.. In terms of biological role, endonuclease that specifically degrades the RNA of RNA-DNA hybrids. The chain is Ribonuclease HI from Neisseria meningitidis serogroup B (strain ATCC BAA-335 / MC58).